A 72-amino-acid chain; its full sequence is U-actitoxin-Aeq5b (72 aa).

Positions Met1 to Ser20 are cleaved as a signal peptide. 4 cysteine pairs are disulfide-bonded: Cys33/Cys71, Cys37/Cys66, Cys44/Cys59, and Cys50/Cys56.

The protein belongs to the Acrorhagin I family. In terms of tissue distribution, expressed by acrorhagi.

The protein resides in the secreted. It localises to the nematocyst. Toxin that is lethal to crab. It interacts with divalent metal ions (zinc and nickel) suggesting it may function as a metal ion chelator to regulate metal ion levels or as a metal ion transporter, or that its function is modulated by metal ions. Is not active against any of the voltage-gated potassium and sodium channels tested. In addition, it does not show activity in bacterial and fungal growth inhibitory assays as well as in hemolytic assays. The protein is U-actitoxin-Aeq5b of Actinia equina (Beadlet anemone).